A 121-amino-acid chain; its full sequence is Putative iron-sulfur cluster insertion protein ErpA (121 aa).

Positions 49, 113, and 115 each coordinate iron-sulfur cluster.

This sequence belongs to the HesB/IscA family. In terms of assembly, homodimer. The cofactor is iron-sulfur cluster.

Its function is as follows. Required for insertion of 4Fe-4S clusters. The chain is Putative iron-sulfur cluster insertion protein ErpA from Nitrosomonas eutropha (strain DSM 101675 / C91 / Nm57).